The following is a 414-amino-acid chain: Histidinol dehydrogenase (414 aa).

NAD(+) is bound by residues Tyr-116, Gln-177, and Asn-200. Substrate-binding residues include Thr-223, Gln-245, and His-248. Residues Gln-245 and His-248 each contribute to the Zn(2+) site. Active-site proton acceptor residues include Glu-313 and His-314. His-314, Asp-347, Glu-401, and His-406 together coordinate substrate. Asp-347 lines the Zn(2+) pocket. His-406 provides a ligand contact to Zn(2+).

It belongs to the histidinol dehydrogenase family. Zn(2+) serves as cofactor.

The enzyme catalyses L-histidinol + 2 NAD(+) + H2O = L-histidine + 2 NADH + 3 H(+). Its pathway is amino-acid biosynthesis; L-histidine biosynthesis; L-histidine from 5-phospho-alpha-D-ribose 1-diphosphate: step 9/9. Its function is as follows. Catalyzes the sequential NAD-dependent oxidations of L-histidinol to L-histidinaldehyde and then to L-histidine. This is Histidinol dehydrogenase from Staphylococcus epidermidis (strain ATCC 12228 / FDA PCI 1200).